Reading from the N-terminus, the 117-residue chain is MHEMSIALSIVDAVVAKARQEGGVRISAIDLLIGKLAGIEPESLKFCFSAAARETLAAEALLNIEEPEGVGECGECGMSFPVNFYYAECPRCRSLRVKIVSGEEFLIQSMTIEEEGE.

His-2 serves as a coordination point for Ni(2+). Zn(2+) contacts are provided by Cys-73, Cys-76, Cys-89, and Cys-92.

The protein belongs to the HypA/HybF family.

Its function is as follows. Involved in the maturation of [NiFe] hydrogenases. Required for nickel insertion into the metal center of the hydrogenase. The chain is Hydrogenase maturation factor HypA from Pelodictyon phaeoclathratiforme (strain DSM 5477 / BU-1).